The primary structure comprises 681 residues: Protein hook (681 aa).

Positions 6-123 constitute a Calponin-homology (CH) domain; that stretch reads NEMYYSLLEW…RLLQLVLGCA (118 aa). 2 coiled-coil regions span residues 135 to 439 and 482 to 584; these read EIMS…LKCG and QTAL…KYRK.

This sequence belongs to the hook family. As to quaternary structure, homodimer. Interacts with microtubules via its N-terminus.

It is found in the cytoplasm. The protein resides in the cytoskeleton. It localises to the endosome. The protein localises to the synapse. Functionally, involved in endocytic trafficking by stabilizing organelles of the endocytic pathway. Probably acts as a cytoskeletal linker protein required to tether endosome vesicles to the cytoskeleton. Involved in modulation of endocytosis at stages required for down-regulation of membrane proteins that control synapse size. Not involved in synaptic vesicle recycling. Required in R7 cells for boss endocytosis into multivesicular bodies (MVBs). Has a role in regulating adult longevity. This Drosophila ananassae (Fruit fly) protein is Protein hook.